The following is a 286-amino-acid chain: uncharacterized protein (286 aa).

The disordered stretch occupies residues 1–47 (MAIPFLHKGGSDDSTHHHTHDYDHHNHDHHGHDHHSHDSSSNSSSEA). Positions 9–26 (GGSDDSTHHHTHDYDHHN) are enriched in basic and acidic residues. GTP is bound at residue 93 to 100 (GPVGSGKT).

It belongs to the SIMIBI class G3E GTPase family. UreG subfamily.

It localises to the cytoplasm. Its subcellular location is the nucleus. Its function is as follows. Probably facilitates nickel incorporation. This is an uncharacterized protein from Schizosaccharomyces pombe (strain 972 / ATCC 24843) (Fission yeast).